The following is a 280-amino-acid chain: Formamidopyrimidine-DNA glycosylase (280 aa).

The Schiff-base intermediate with DNA role is filled by P2. The active-site Proton donor is E3. Residue K60 is the Proton donor; for beta-elimination activity of the active site. DNA is bound by residues H93 and R112. Residues 240–274 (YVYGQHSKPCRVCGADIIKIKVGGRGTHLCPTCQP) form an FPG-type zinc finger. The Proton donor; for delta-elimination activity role is filled by R264.

Belongs to the FPG family. As to quaternary structure, monomer. Requires Zn(2+) as cofactor.

It catalyses the reaction Hydrolysis of DNA containing ring-opened 7-methylguanine residues, releasing 2,6-diamino-4-hydroxy-5-(N-methyl)formamidopyrimidine.. The enzyme catalyses 2'-deoxyribonucleotide-(2'-deoxyribose 5'-phosphate)-2'-deoxyribonucleotide-DNA = a 3'-end 2'-deoxyribonucleotide-(2,3-dehydro-2,3-deoxyribose 5'-phosphate)-DNA + a 5'-end 5'-phospho-2'-deoxyribonucleoside-DNA + H(+). Functionally, involved in base excision repair of DNA damaged by oxidation or by mutagenic agents. Acts as a DNA glycosylase that recognizes and removes damaged bases. Has a preference for oxidized purines, such as 7,8-dihydro-8-oxoguanine (8-oxoG). Has AP (apurinic/apyrimidinic) lyase activity and introduces nicks in the DNA strand. Cleaves the DNA backbone by beta-delta elimination to generate a single-strand break at the site of the removed base with both 3'- and 5'-phosphates. This Oceanobacillus iheyensis (strain DSM 14371 / CIP 107618 / JCM 11309 / KCTC 3954 / HTE831) protein is Formamidopyrimidine-DNA glycosylase.